The following is a 358-amino-acid chain: U5 small nuclear ribonucleoprotein 40 kDa protein (358 aa).

Residue Lys18 forms a Glycyl lysine isopeptide (Lys-Gly) (interchain with G-Cter in SUMO2) linkage. Asymmetric dimethylarginine is present on Arg21. WD repeat units lie at residues 65 to 104, 108 to 147, 150 to 190, 192 to 231, 234 to 273, 284 to 323, and 326 to 358; these read GHEGEVYCCKFHPNGSTLASAGFDRLILLWNVYGDCDNYA, GHSGAVMELHYNTDGSMLFSASTDKTVAVWDSETGERVKR, GHTS…AVQT, QNTYQVLAVTFNDTSDQIISGGIDNDIKVWDLRQNKLTYT, GHADSVTGLSLSSEGSYLLSNAMDNTVRVWDVRPFAPKER, NFEKNLLRCSWSPDGSKIAAGSADRFVYVWDTTSRRVLYK, and GHAGSINEVAFHPDEPIILSASSDKRLYMGEIQ. Lys271 is covalently cross-linked (Glycyl lysine isopeptide (Lys-Gly) (interchain with G-Cter in SUMO2)).

In terms of assembly, component of the pre-catalytic and catalytic spliceosome complexes. Component of the postcatalytic spliceosome P complex. Part of the U5 snRNP complex. Interacts with PRPF8. Component of the U4/U6-U5 tri-snRNP complex composed of the U4, U6 and U5 snRNAs and at least PRPF3, PRPF4, PRPF6, PRPF8, PRPF31, SNRNP200, TXNL4A, WDR57, SNRNP40, DDX23, CD2BP2, PPIH, SNU13, EFTUD2, SART1 and USP39. Component of the minor spliceosome, which splices U12-type introns.

It is found in the nucleus. Functionally, required for pre-mRNA splicing as component of the activated spliceosome. Component of the U5 small nuclear ribonucleoprotein (snRNP) complex and the U4/U6-U5 tri-snRNP complex, building blocks of the spliceosome. As a component of the minor spliceosome, involved in the splicing of U12-type introns in pre-mRNAs. The chain is U5 small nuclear ribonucleoprotein 40 kDa protein (Snrnp40) from Mus musculus (Mouse).